Reading from the N-terminus, the 303-residue chain is Geranylgeranyl pyrophosphate synthase (303 aa).

The isopentenyl diphosphate site is built by Lys30, Arg33, and His62. Mg(2+) contacts are provided by Asp69 and Asp73. Arg78 provides a ligand contact to dimethylallyl diphosphate. Arg79 is a binding site for isopentenyl diphosphate. 5 residues coordinate dimethylallyl diphosphate: Lys156, Thr157, Gln190, Lys207, and Lys217.

Belongs to the FPP/GGPP synthase family. It depends on Mg(2+) as a cofactor.

It is found in the cytoplasm. It catalyses the reaction isopentenyl diphosphate + dimethylallyl diphosphate = (2E)-geranyl diphosphate + diphosphate. The catalysed reaction is isopentenyl diphosphate + (2E)-geranyl diphosphate = (2E,6E)-farnesyl diphosphate + diphosphate. It carries out the reaction isopentenyl diphosphate + (2E,6E)-farnesyl diphosphate = (2E,6E,10E)-geranylgeranyl diphosphate + diphosphate. The protein operates within isoprenoid biosynthesis; farnesyl diphosphate biosynthesis; farnesyl diphosphate from geranyl diphosphate and isopentenyl diphosphate: step 1/1. It functions in the pathway isoprenoid biosynthesis; geranyl diphosphate biosynthesis; geranyl diphosphate from dimethylallyl diphosphate and isopentenyl diphosphate: step 1/1. It participates in isoprenoid biosynthesis; geranylgeranyl diphosphate biosynthesis; geranylgeranyl diphosphate from farnesyl diphosphate and isopentenyl diphosphate: step 1/1. Its function is as follows. Catalyzes the trans-addition of the three molecules of IPP onto DMAPP to form geranylgeranyl pyrophosphate. The polypeptide is Geranylgeranyl pyrophosphate synthase (Mucor circinelloides f. lusitanicus (Mucor racemosus var. lusitanicus)).